We begin with the raw amino-acid sequence, 362 residues long: Porin Omp2b (362 aa).

The signal sequence occupies residues 1–22 (MNIKSLLLGSAAALVAASGAQA).

This sequence belongs to the alphaproteobacteria porin family. In terms of assembly, homotrimer.

Its subcellular location is the cell outer membrane. Forms passive diffusion pores that allow small molecular weight hydrophilic materials across the outer membrane. In Brucella abortus (strain S19), this protein is Porin Omp2b (omp2b).